The following is a 353-amino-acid chain: Photosystem II protein D1 (353 aa).

Position 2 is an N-acetylthreonine (T2). T2 carries the post-translational modification Phosphothreonine. The next 3 helical transmembrane spans lie at 29-46 (YIGW…TATS), 118-133 (HFFL…EWEL), and 142-156 (WIAV…AATA). H118 is a binding site for chlorophyll a. A pheophytin a-binding site is contributed by Y126. 2 residues coordinate [CaMn4O5] cluster: D170 and E189. A helical transmembrane segment spans residues 197 to 218 (FHMLGVAGVFGGSLFSAMHGSL). H198 serves as a coordination point for chlorophyll a. Residues H215 and 264–265 (SF) each bind a quinone. H215 is a binding site for Fe cation. A Fe cation-binding site is contributed by H272. Residues 274–288 (FLAAWPVVGIWFTAL) traverse the membrane as a helical segment. Residues H332, E333, D342, and A344 each contribute to the [CaMn4O5] cluster site. A propeptide spanning residues 345 to 353 (VVEAPAVNG) is cleaved from the precursor.

Belongs to the reaction center PufL/M/PsbA/D family. As to quaternary structure, PSII is composed of 1 copy each of membrane proteins PsbA, PsbB, PsbC, PsbD, PsbE, PsbF, PsbH, PsbI, PsbJ, PsbK, PsbL, PsbM, PsbT, PsbX, PsbY, PsbZ, Psb30/Ycf12, at least 3 peripheral proteins of the oxygen-evolving complex and a large number of cofactors. It forms dimeric complexes. The D1/D2 heterodimer binds P680, chlorophylls that are the primary electron donor of PSII, and subsequent electron acceptors. It shares a non-heme iron and each subunit binds pheophytin, quinone, additional chlorophylls, carotenoids and lipids. D1 provides most of the ligands for the Mn4-Ca-O5 cluster of the oxygen-evolving complex (OEC). There is also a Cl(-1) ion associated with D1 and D2, which is required for oxygen evolution. The PSII complex binds additional chlorophylls, carotenoids and specific lipids. is required as a cofactor. In terms of processing, tyr-161 forms a radical intermediate that is referred to as redox-active TyrZ, YZ or Y-Z. C-terminally processed by CTPA; processing is essential to allow assembly of the oxygen-evolving complex and thus photosynthetic growth.

The protein localises to the plastid. It is found in the chloroplast thylakoid membrane. The catalysed reaction is 2 a plastoquinone + 4 hnu + 2 H2O = 2 a plastoquinol + O2. Photosystem II (PSII) is a light-driven water:plastoquinone oxidoreductase that uses light energy to abstract electrons from H(2)O, generating O(2) and a proton gradient subsequently used for ATP formation. It consists of a core antenna complex that captures photons, and an electron transfer chain that converts photonic excitation into a charge separation. The D1/D2 (PsbA/PsbD) reaction center heterodimer binds P680, the primary electron donor of PSII as well as several subsequent electron acceptors. This chain is Photosystem II protein D1, found in Chlorella vulgaris (Green alga).